The primary structure comprises 387 residues: Double C2-like domain-containing protein gamma (387 aa).

C2 domains lie at 83 to 209 (ALGT…DICL) and 243 to 376 (ERGR…ELWH). 5 residues coordinate Ca(2+): aspartate 274, aspartate 280, aspartate 334, aspartate 336, and aspartate 342.

Ca(2+) is required as a cofactor.

May be involved in regulation of vesicular trafficking. In vitro, does not bind calcium and phospholipids. This Mus musculus (Mouse) protein is Double C2-like domain-containing protein gamma (Doc2g).